The chain runs to 466 residues: FERM domain-containing protein 8 (466 aa).

Residue Met-1 is modified to N-acetylmethionine. The tract at residues 1 to 21 (MEGAEGNAGQPGPAERSHRSS) is disordered. Ser-24 carries the phosphoserine modification. The FERM domain occupies 30–377 (ADVLVYLADD…YCIELSQAAE (348 aa)). A disordered region spans residues 379-409 (TLSQESASGPHEAPSPSPPPTQRPKLRRQGS). Ser-384 is modified (phosphoserine). Positions 391–400 (APSPSPPPTQ) are enriched in pro residues. At Ser-409 the chain carries Phosphoserine. A Phosphothreonine modification is found at Thr-420. Phosphoserine occurs at positions 440 and 447. Residues 442 to 460 (FSRQLSSSQGSYTVVQPTD) are compositionally biased toward polar residues. The interval 442–466 (FSRQLSSSQGSYTVVQPTDDSLEQS) is disordered.

In terms of assembly, interacts with iRhom proteins, including iRhom2/RHBDF2 (via cytoplasmic N-termini); this interaction leads to mutual protein stabilization. Interacts with LRP6; this interaction affects LRP6-binding to AXIN1. In terms of tissue distribution, widely expressed (at protein level).

The protein resides in the cytoplasm. The protein localises to the cytosol. It localises to the cell membrane. In terms of biological role, promotes the cell surface stability of iRhom1/RHBDF1 and iRhom2/RHBDF2 and prevents their degradation via the endolysosomal pathway. By acting on iRhoms, involved in ADAM17-mediated shedding of TNF, amphiregulin/AREG, HBEGF and TGFA from the cell surface. Negatively regulates Wnt signaling, possibly by antagonizing the recruitment of AXIN1 to LRP6. This is FERM domain-containing protein 8 (Frmd8) from Mus musculus (Mouse).